The sequence spans 244 residues: uncharacterized protein (244 aa).

The next 6 membrane-spanning stretches (helical) occupy residues 22-42 (IMLQ…LLSF), 63-83 (FIFS…WGLT), 110-130 (VILL…EAFA), 140-160 (IMSL…NLTV), 186-206 (GVLF…IFQL), and 213-233 (AVFD…MLVV).

The protein resides in the cell membrane. This is an uncharacterized protein from Haemophilus influenzae (strain ATCC 51907 / DSM 11121 / KW20 / Rd).